The sequence spans 197 residues: uncharacterized protein (197 aa).

The signal sequence occupies residues 1 to 30 (MSTYIIINIALLIAIVALIFFLSKKTKSEA).

This is an uncharacterized protein from Acanthamoeba polyphaga (Amoeba).